The following is a 922-amino-acid chain: MERGLPLLCATLALALALAGAFRSDKCGGTIKIENPGYLTSPGYPHSYHPSEKCEWLIQAPEPYQRIMINFNPHFDLEDRDCKYDYVEVIDGENEGGRLWGKFCGKIAPSPVVSSGPFLFIKFVSDYETHGAGFSIRYEIFKRGPECSQNYTAPTGVIKSPGFPEKYPNSLECTYIIFAPKMSEIILEFESFDLEQDSNPPGGVFCRYDRLEIWDGFPEVGPHIGRYCGQKTPGRIRSSSGILSMVFYTDSAIAKEGFSANYSVLQSSISEDFKCMEALGMESGEIHSDQITASSQYGTNWSVERSRLNYPENGWTPGEDSYREWIQVDLGLLRFVTAVGTQGAISKETKKKYYVKTYRVDISSNGEDWITLKEGNKAIIFQGNTNPTDVVFGVFPKPLITRFVRIKPASWETGISMRFEVYGCKITDYPCSGMLGMVSGLISDSQITASNQGDRNWMPENIRLVTSRTGWALPPSPHPYINEWLQVDLGDEKIVRGVIIQGGKHRENKVFMRKFKIAYSNNGSDWKMIMDDSKRKAKSFEGNNNYDTPELRAFTPLSTRFIRIYPERATHSGLGLRMELLGCEVEVPTAGPTTPNGNPVDECDDDQANCHSGTGDDFQLTGGTTVLATEKPTIIDSTIQSEFPTYGFNCEFGWGSHKTFCHWEHDSHAQLRWRVLTSKTGPIQDHTGDGNFIYSQADENQKGKVARLVSPVVYSQSSAHCMTFWYHMSGSHVGTLRVKLHYQKPEEYDQLVWMVVGHQGDHWKEGRVLLHKSLKLYQVIFEGEIGKGNLGGIAVDDISINNHIPQEDCAKPTDLDKKNTEIKIDETGSTPGYEEGKGDKNISRKPGNVLKTLDPILITIIAMSALGVLLGAVCGVVLYCACWHNGMSERNLSALENYNFELVDGVKLKKDKLNPQSNYSEA.

The first 21 residues, 1–21, serve as a signal peptide directing secretion; sequence MERGLPLLCATLALALALAGA. Topologically, residues 22 to 855 are extracellular; that stretch reads FRSDKCGGTI…PGNVLKTLDP (834 aa). Cystine bridges form between Cys27-Cys54, Cys82-Cys104, and Cys147-Cys173. CUB domains follow at residues 27–141 and 147–265; these read CGGT…YEIF and CSQN…YSVL. Asn150 carries an N-linked (GlcNAc...) asparagine glycan. Ca(2+)-binding residues include Glu195, Asp209, and Asp250. Cys206 and Cys228 form a disulfide bridge. N-linked (GlcNAc...) asparagine glycosylation is found at Asn261, Asn300, and Asn522. 2 cysteine pairs are disulfide-bonded: Cys275-Cys424 and Cys431-Cys583. F5/8 type C domains lie at 275 to 424 and 431 to 583; these read CMEA…VYGC and CSGM…LLGC. O-linked (Xyl...) (chondroitin sulfate) serine; alternate glycosylation occurs at Ser612. The O-linked (Xyl...) (heparan sulfate) serine; alternate glycan is linked to Ser612. The MAM domain occupies 645–811; it reads TYGFNCEFGW…NHIPQEDCAK (167 aa). Residue Ser829 is glycosylated (O-linked (Xyl...) (chondroitin sulfate) serine). The N-linked (GlcNAc...) asparagine glycan is linked to Asn841. Residues 856–880 form a helical membrane-spanning segment; the sequence is ILITIIAMSALGVLLGAVCGVVLYC. At 881-922 the chain is on the cytoplasmic side; that stretch reads ACWHNGMSERNLSALENYNFELVDGVKLKKDKLNPQSNYSEA. Position 893 is a phosphoserine (Ser893).

Belongs to the neuropilin family. In terms of assembly, homodimer, and heterodimer with NRP2. Binds PLXNB1. Interacts with FER. Interacts with VEGFA. Interacts with ABCB8/MITOSUR in mitochondria. Found in the embryonic nervous system. Expressed in dorsal root ganglia.

The protein resides in the mitochondrion membrane. It is found in the cell membrane. The protein localises to the cytoplasm. Functionally, cell-surface receptor involved in the development of the cardiovascular system, in angiogenesis, in the formation of certain neuronal circuits and in organogenesis outside the nervous system. Mediates the chemorepulsant activity of semaphorins. Recognizes a C-end rule (CendR) motif R/KXXR/K on its ligands which causes cellular internalization and vascular leakage. It binds to semaphorin 3A, the PLGF-2 isoform of PGF, the VEGF165 isoform of VEGFA and VEGFB. Coexpression with KDR results in increased VEGF165 binding to KDR as well as increased chemotaxis. Regulates VEGF-induced angiogenesis. Binding to VEGFA initiates a signaling pathway needed for motor neuron axon guidance and cell body migration, including for the caudal migration of facial motor neurons from rhombomere 4 to rhombomere 6 during embryonic development. Regulates mitochondrial iron transport via interaction with ABCB8/MITOSUR. This Rattus norvegicus (Rat) protein is Neuropilin-1 (Nrp1).